Here is a 445-residue protein sequence, read N- to C-terminus: MKLFGTDGVRGKAGEFLDSFLAMRLAMAAGIYFKDKSITNNILVGKDTRRSGYMIENAIVSGLTSIGYNVIQIGPMPTPAIAFLTEDMRCDAGIMISASHNPYYDNGIKFFDAHGNKLSEDIEKKIEEIYFDDKLIQASKVDMEKIGQAKRIDDVIGRYIVSIKNSFPKDLTLKSLRVVLDVAHGAAYKVAPTVFKELGAEVIVMSDKPNGLNINENCGALHPANLAAEVKRLRADVGFAFDGDADRLVVVDEKGEVANGDSLLGVLALYLKEQGKLQSSVVATIMSNGALKEFLNKHGIELDTCNVGDKYVLEKLKANGGNFGGEQSGHIIFSDYAKTGDGLIAALQFSALMLSKKKSASSILGQVKPYPQLLTNLKIAEKKDLDKIKGLKELKKDLENKNINTLFRYSGTENLIRLLLEAKDIKLLEKEMKNVVEFFKKALNG.

Serine 99 acts as the Phosphoserine intermediate in catalysis. Residues serine 99, aspartate 242, aspartate 244, and aspartate 246 each coordinate Mg(2+). A Phosphoserine modification is found at serine 99.

This sequence belongs to the phosphohexose mutase family. Mg(2+) is required as a cofactor. Post-translationally, activated by phosphorylation.

The catalysed reaction is alpha-D-glucosamine 1-phosphate = D-glucosamine 6-phosphate. In terms of biological role, catalyzes the conversion of glucosamine-6-phosphate to glucosamine-1-phosphate. In Campylobacter jejuni subsp. jejuni serotype O:23/36 (strain 81-176), this protein is Phosphoglucosamine mutase.